We begin with the raw amino-acid sequence, 471 residues long: MTGDGQGPGDGQGPGNLTTSISWAGLPVLVVGIGVSGLAAARALLARGARVRVVDAGDSPRHQGAAATLRALGAEVNLGGLPAGPGDSALVVTSPGVPPTAPLITGAAGAGIPVWGEVELAWRWRGGSRWLAVTGTNGKTTTTEMLGAMLAAGGRRSTTAGNIGTPIVDAVAAEPPYETLAVELSSFQLHYTHTMAPLAAAVLNVAPDHLDWHGGAAAYAAAKAGIWRRPGTTAIGNADDATSADLLAAAPGRRVLFGLDPAARPRPGLTVVDGHLVDDAFGGGRLVAVRDLVLTSPHMISNALAAAALARAEGVGPAAIGAALVAFRPGAHRNAEVAVIDGVRWVDDSKATNPHAAAASLAGYPSVVWIAGGLNKGLAFDDLVRDARRVLRAAVLIGRCADEIAAALARHAPDVPVERADGMDDAVKAAAAFATTGDTVLLAPAAASMDMFRDYAARGDLFAAAVRAREG.

135 to 141 (GTNGKTT) serves as a coordination point for ATP.

Belongs to the MurCDEF family.

It localises to the cytoplasm. It catalyses the reaction UDP-N-acetyl-alpha-D-muramoyl-L-alanine + D-glutamate + ATP = UDP-N-acetyl-alpha-D-muramoyl-L-alanyl-D-glutamate + ADP + phosphate + H(+). It functions in the pathway cell wall biogenesis; peptidoglycan biosynthesis. Cell wall formation. Catalyzes the addition of glutamate to the nucleotide precursor UDP-N-acetylmuramoyl-L-alanine (UMA). This Frankia casuarinae (strain DSM 45818 / CECT 9043 / HFP020203 / CcI3) protein is UDP-N-acetylmuramoylalanine--D-glutamate ligase.